Here is a 94-residue protein sequence, read N- to C-terminus: Venom protein 59.1 (94 aa).

The signal sequence occupies residues 1 to 22 (MNSREMFCVFILFASFFYCSYA). 6 disulfide bridges follow: cysteine 19–cysteine 47, cysteine 26–cysteine 49, cysteine 32–cysteine 50, cysteine 38–cysteine 53, cysteine 61–cysteine 76, and cysteine 70–cysteine 91. An IGFBP N-terminal domain is found at 23–94 (EQECNCDKSC…GEALEICLRA (72 aa)).

As to expression, expressed by the venom gland.

It localises to the secreted. The polypeptide is Venom protein 59.1 (Lychas mucronatus (Chinese swimming scorpion)).